We begin with the raw amino-acid sequence, 523 residues long: Sialate O-acetylesterase (523 aa).

The N-terminal stretch at 1-23 is a signal peptide; that stretch reads MVAPGLVLGLVLPLILWADRSAG. Residues Asn-107, Asn-138, Asn-267, Asn-290, Asn-401, and Asn-422 are each glycosylated (N-linked (GlcNAc...) asparagine).

Widely expressed with high expression in the testis, prostate, and colon.

The protein localises to the lysosome. The protein resides in the cytoplasm. The enzyme catalyses N-acetyl-9-O-acetylneuraminate + H2O = N-acetylneuraminate + acetate + H(+). It catalyses the reaction an Ac-O-9-sialoglycoconjugate + H2O = a sialoglycoconjugate + acetate + H(+). Catalyzes the removal of O-acetyl ester groups from position 9 of the free diacetylated sialate N-acetyl-9-O-acetylneuraminate (Neu5,9Ac2) in the cytosol and of the diacetylated sialate residues of sialylglycoconjugates in the lysosomes. Together with the sialate-O-acetyltransferase they regulate the balance of acetylated sialoglycoconjugates, key players in various processes such as cell-cell interactions, host-pathogen recognition, and tumor antigenicity. The sequence is that of Sialate O-acetylesterase (SIAE) from Homo sapiens (Human).